We begin with the raw amino-acid sequence, 593 residues long: Probable serine/threonine-protein kinase samkB (593 aa).

Residues 29–93 (WNNEAVCEWL…SIFKKLKNNN (65 aa)) enclose the SAM domain. Residues 108–157 (ESNSINNSNNNNNNNNNNNNNNNNNNNNNNNNNNNNNNNNNNNNNNKIDT) are disordered. Low complexity predominate over residues 113–153 (NNSNNNNNNNNNNNNNNNNNNNNNNNNNNNNNNNNNNNNNN). The Protein kinase domain occupies 186 to 438 (YKLIEEIGRG…SKQLLEAQWF (253 aa)). ATP-binding positions include 192–200 (IGRGAFSIV) and lysine 216. The Proton acceptor role is filled by aspartate 313.

The protein belongs to the protein kinase superfamily. Ser/Thr protein kinase family.

The catalysed reaction is L-seryl-[protein] + ATP = O-phospho-L-seryl-[protein] + ADP + H(+). It catalyses the reaction L-threonyl-[protein] + ATP = O-phospho-L-threonyl-[protein] + ADP + H(+). The chain is Probable serine/threonine-protein kinase samkB (samkB) from Dictyostelium discoideum (Social amoeba).